The primary structure comprises 1714 residues: Intersectin-1 (1714 aa).

One can recognise an EH 1 domain in the interval 21 to 109; the sequence is ERAKHDQQFL…PVMKQQPVAI (89 aa). The 36-residue stretch at 53–88 folds into the EF-hand 1 domain; the sequence is LPQPVLAQIWALADMNNDGRMDQVEFSIAMKLIKLK. Positions 66, 68, 70, 72, and 77 each coordinate Ca(2+). Ser203 is modified (phosphoserine). Residues 221-310 form the EH 2 domain; it reads SRLKYRQLFN…PEYIPPSFRR (90 aa). In terms of domain architecture, EF-hand 2 spans 254–289; sequence LPQAQLASIWNLSDIDQDGKLTAEEFILAMHLIDVA. Residues Asp267, Asp269, Asp271, Lys273, and Glu278 each contribute to the Ca(2+) site. The segment covering 310 to 325 has biased composition (low complexity); it reads RVRSGSGMSVISSSSV. Disordered stretches follow at residues 310–356 and 614–706; these read RVRS…KREN and SKQQ…QSRL. Phosphoserine is present on residues Ser318, Ser334, and Ser335. The interval 326–702 is KLERQ; sequence DQRLPEEPSS…ERAKPEMQDK (377 aa). 2 stretches are compositionally biased toward basic and acidic residues: residues 340-356 and 622-706; these read QPEK…KREN and RSLE…QSRL. Residues 354–658 adopt a coiled-coil conformation; the sequence is RENFERGSVE…QRRVQERDKQ (305 aa). Ser685 is subject to Phosphoserine. The SH3 1 domain occupies 738-799; sequence VKVVYYRALY…PANYAEKIPE (62 aa). Residues 827–863 form a disordered region; it reads APLPVTSSEPSTTPNNWADFSSTWPSSSNEKPETDNW. The segment covering 831-855 has biased composition (polar residues); the sequence is VTSSEPSTTPNNWADFSSTWPSSSN. Thr890 bears the Phosphothreonine mark. Residues Ser894, Ser895, and Ser897 each carry the phosphoserine modification. An SH3 2 domain is found at 906-964; sequence VEGLQAQALYPWRAKKDNHLNFNKSDVITVLEQQDMWWFGEVQGQKGWFPKSYVKLISG. Ser971 is modified (phosphoserine). Thr977 bears the Phosphothreonine mark. Residues Ser979 and Ser988 each carry the phosphoserine modification. SH3 domains lie at 995–1053 and 1067–1131; these read IPGE…LKDS and KKPE…LLSP. A required for interaction with FCHSD2 region spans residues 1067–1131; the sequence is KKPEIAQVIA…PANYVKLLSP (65 aa). The short motif at 1097-1120 is the Bipartite nuclear localization signal; in isoform 2 element; that stretch reads RKKNPGGWWEGELQARGKKRQIGW. Residue Ser1130 is modified to Phosphoserine. Thr1137 carries the phosphothreonine modification. An SH3 5 domain is found at 1148 to 1207; it reads PAVCQVIGMYDYTAQNDDELAFSKGQIINVLNKEDPDWWKGEVSGQVGLFPSNYVKLTTD. The 187-residue stretch at 1230–1416 folds into the DH domain; the sequence is KRQGYIHELI…EELCSQVNEG (187 aa). Residues 1455 to 1564 enclose the PH domain; it reads KFLHSGKLYK…WVQKIKAASE (110 aa). In terms of domain architecture, C2 spans 1572–1688; it reads KKREKAYLVR…KKDQGSKGPV (117 aa). A Phosphoserine modification is found at Ser1638. Ca(2+) contacts are provided by Asp1660, Ser1663, and Asp1666.

As to quaternary structure, interacts (via DH domain) with CDC42. Interacts (via SH3 domain 1) with WASL. Interacts with dynamin, SNAP25 and SNAP23. Interacts with clathrin-associated proteins and other components of the endocytic machinery, such as SPIN90, EPS15, EPN1, EPN2, STON2, FCHO1, FCHO2 and DAB2. Interacts (via SH3 domains) with REPS1 and SGIP1. Interacts with ARHGAP31. Interacts with ADAM15. Interacts with PRRT2. Interacts (via SH3 domain 4) with FCHSD2 (via SH3 domain 2). Interacts (via SH3 domain 1) with DENND2B. Interacts (via SH3 domains) with CBL. Isoform 2: Interacts with CBL and DNM1. Isoform 2: Interacts with LMNA. Isoform 2: Interacts with importin subunit KPNA1; this is likely to mediate its import into the nucleus. Interacts with DNM2. The cofactor is Ca(2+). In terms of tissue distribution, detected in brain, adrenal gland and heart. Detected in neurons at the calyx of Held (at protein level). Isoform 1: Primarily detected in brain neurons. Isoform 2: Primarily detected in glia (at protein level). Widely expressed. Expressed at high levels in brain, heart and skeletal muscle.

The protein resides in the endomembrane system. It localises to the synapse. Its subcellular location is the synaptosome. The protein localises to the cell projection. It is found in the lamellipodium. The protein resides in the cell membrane. It localises to the membrane. Its subcellular location is the clathrin-coated pit. The protein localises to the recycling endosome. It is found in the endosome. The protein resides in the cytoplasmic vesicle. It localises to the cytoplasm. Its subcellular location is the nucleus envelope. Its function is as follows. Adapter protein that provides a link between the endocytic membrane traffic and the actin assembly machinery. Acts as a guanine nucleotide exchange factor (GEF) for CDC42, and thereby stimulates actin nucleation mediated by WASL and the ARP2/3 complex. Plays a role in the assembly and maturation of clathrin-coated vesicles. Recruits FCHSD2 to clathrin-coated pits. Involved in endocytosis of activated EGFR, and probably also other growth factor receptors. Involved in endocytosis of integrin beta-1 (ITGB1) and transferrin receptor (TFR); internalization of ITGB1 as DAB2-dependent cargo but not TFR may involve association with DAB2. Promotes ubiquitination and subsequent degradation of EGFR, and thereby contributes to the down-regulation of EGFR-dependent signaling pathways. In chromaffin cells, required for normal exocytosis of catecholamines. Required for rapid replenishment of release-ready synaptic vesicles at presynaptic active zones. Inhibits ARHGAP31 activity toward RAC1. Plays a role in synaptic vesicle endocytosis in brain neurons. The protein is Intersectin-1 of Mus musculus (Mouse).